A 345-amino-acid chain; its full sequence is DNA-directed RNA polymerase subunit alpha (345 aa).

An alpha N-terminal domain (alpha-NTD) region spans residues 1 to 234 (MRKNEMSTSK…DLLTTFLYVR (234 aa)). The tract at residues 266 to 345 (LEERVLENRF…DKKIVLNRRK (80 aa)) is alpha C-terminal domain (alpha-CTD).

This sequence belongs to the RNA polymerase alpha chain family. As to quaternary structure, in plastids the minimal PEP RNA polymerase catalytic core is composed of four subunits: alpha, beta, beta', and beta''. When a (nuclear-encoded) sigma factor is associated with the core the holoenzyme is formed, which can initiate transcription.

It localises to the plastid. Its subcellular location is the chloroplast. The enzyme catalyses RNA(n) + a ribonucleoside 5'-triphosphate = RNA(n+1) + diphosphate. Its function is as follows. DNA-dependent RNA polymerase catalyzes the transcription of DNA into RNA using the four ribonucleoside triphosphates as substrates. The chain is DNA-directed RNA polymerase subunit alpha from Adiantum capillus-veneris (Maidenhair fern).